The following is a 569-amino-acid chain: Interleukin-1 receptor type 1 (569 aa).

The first 17 residues, 1–17 (MKVLLRLICFIALLISS), serve as a signal peptide directing secretion. At 18–336 (LEADKCKERE…LIYPVTNFQK (319 aa)) the chain is on the extracellular side. 4 disulfide bridges follow: C23–C104, C44–C96, C121–C164, and C142–C196. Ig-like C2-type domains lie at 23–110 (CKER…IKIS), 118–210 (PNLC…YPIT), and 226–328 (PVIV…IQLI). An N-linked (GlcNAc...) asparagine glycan is attached at N100. N193, N233, N249, N263, and N297 each carry an N-linked (GlcNAc...) asparagine glycan. Cysteines 248 and 312 form a disulfide. Residues 337–356 (HMIGICVTLTVIIVCSVFIY) traverse the membrane as a helical segment. The Cytoplasmic segment spans residues 357-569 (KIFKIDIVLW…LQREAHVPLG (213 aa)). In terms of domain architecture, TIR spans 383–538 (KTYDAYILYP…RFWKNVRYHM (156 aa)). E470 is an active-site residue. Residue Y496 is modified to Phosphotyrosine. The tract at residues 540–569 (VQRRSPSSKHQLLSPATKEKLQREAHVPLG) is disordered. Positions 556–569 (TKEKLQREAHVPLG) are enriched in basic and acidic residues.

This sequence belongs to the interleukin-1 receptor family. The interleukin-1 receptor complex is a heterodimer of IL1R1 and IL1RAP. Interacts with PIK3R1. Interacts with IL1A. In terms of processing, a soluble form (sIL1R1) is probably produced by proteolytic cleavage at the cell surface (shedding). Rapidly phosphorylated on Tyr-496 in response to IL-1, which creates a SH2 binding site for the PI 3-kinase regulatory subunit PIK3R1. As to expression, expressed in T-helper cell subsets. Preferentially expressed in T-helper 1 (Th1) cells.

The protein resides in the membrane. The protein localises to the cell membrane. It is found in the secreted. It catalyses the reaction NAD(+) + H2O = ADP-D-ribose + nicotinamide + H(+). Functionally, receptor for IL1A, IL1B and IL1RN. After binding to interleukin-1 associates with the coreceptor IL1RAP to form the high affinity interleukin-1 receptor complex which mediates interleukin-1-dependent activation of NF-kappa-B, MAPK and other pathways. Signaling involves the recruitment of adapter molecules such as TOLLIP, MYD88, and IRAK1 or IRAK2 via the respective TIR domains of the receptor/coreceptor subunits. Binds ligands with comparable affinity and binding of antagonist IL1RN prevents association with IL1RAP to form a signaling complex. Involved in IL1B-mediated costimulation of IFNG production from T-helper 1 (Th1) cells. In Homo sapiens (Human), this protein is Interleukin-1 receptor type 1 (IL1R1).